A 466-amino-acid chain; its full sequence is 23S rRNA (uracil(1939)-C(5))-methyltransferase RlmD (466 aa).

The 54-residue stretch at 1–54 (MVDVLNIESLDLEARGIAHRDGKVLFVEGALPGERVTVQTVRRKPSYEIAKVEE) folds into the TRAM domain. Positions 67, 73, 76, and 155 each coordinate [4Fe-4S] cluster. S-adenosyl-L-methionine contacts are provided by Gln-264, Phe-293, Asn-298, Glu-314, Asn-342, and Asp-363. The active-site Nucleophile is Cys-393.

Belongs to the class I-like SAM-binding methyltransferase superfamily. RNA M5U methyltransferase family. RlmD subfamily.

It catalyses the reaction uridine(1939) in 23S rRNA + S-adenosyl-L-methionine = 5-methyluridine(1939) in 23S rRNA + S-adenosyl-L-homocysteine + H(+). Its function is as follows. Catalyzes the formation of 5-methyl-uridine at position 1939 (m5U1939) in 23S rRNA. The protein is 23S rRNA (uracil(1939)-C(5))-methyltransferase RlmD of Bordetella pertussis (strain Tohama I / ATCC BAA-589 / NCTC 13251).